Here is a 613-residue protein sequence, read N- to C-terminus: WD40 repeat-containing protein HOS15 (613 aa).

The LisH domain maps to 5–37; that stretch reads TSVELNFLVFRYLQESGFTHAAFTLGYEAGINK. Disordered regions lie at residues 101–174 and 193–214; these read KKRK…REKM and EIER…KQLG. WD repeat units lie at residues 263–302, 322–362, 363–402, 405–443, 446–485, 488–536, 539–580, and 582–613; these read GHTS…FKAV, EKSK…STLS, KHKG…WKQQ, FHSG…PAKT, GHQG…FVHD, EHTK…MLCS, GHRE…KTYT, and NGGI…DFRM.

Its subcellular location is the nucleus. In terms of biological role, acts as a repressor of cold stress-regulated gene expression. Interacts specifically with and promotes deacetylation of histone H4. Plays a role in gene regulation for plant acclimation and tolerance to cold stress. This is WD40 repeat-containing protein HOS15 from Arabidopsis thaliana (Mouse-ear cress).